The chain runs to 293 residues: Magnetosome protein MamB (293 aa).

At 1–12 (MTTAACRKCRDE) the chain is on the cytoplasmic side. The interval 1–214 (MTTAACRKCR…GLMDTSVEND (214 aa)) is transmembrane domain (TMD). Residues 13-33 (VIWWAFFINIGQTTYKGVLGV) traverse the membrane as a helical segment. Residues 34–78 (LSGSAALVADAMHSGADVVATLVTMFSVKVSDKKADEKYPFGYGN) are Lumenal-facing. Residues 79 to 99 (IQFIASSIVGLILFFGALYLM) form a helical membrane-spanning segment. The Cytoplasmic segment spans residues 100-105 (YESTMQ). Residues 106–126 (IIAGNTSSPSPFAVLGAIVSI) form a helical membrane-spanning segment. The Lumenal segment spans residues 127–158 (ATNELMFRYQSCVGRQNNSPAIIANAWDNRSD). Residues 159–179 (ALSSVAVLIGIVAAVVGFPIA) traverse the membrane as a helical segment. Over 180–293 (DRLAAIGVGI…VGVTPVRIAA (114 aa)) the chain is Cytoplasmic. The C-terminal domain (CTD) stretch occupies residues 215 to 293 (VLVDAYNIAK…VGVTPVRIAA (79 aa)). Residues His-245, Asp-247, and His-283 each coordinate Zn(2+).

Belongs to the cation diffusion facilitator (CDF) transporter (TC 2.A.4) family. As to quaternary structure, the isolated C-terminal domain (approximately 213-293) forms homodimers. Forms heterodimers with MamM.

Its subcellular location is the magnetosome membrane. In terms of biological role, plays a dual, essential role in magnetosome formation; required for magnetosome vesicle formation as well as biomineralization. Probably binds and transports iron. Requires heterodimerization with MamM for stability. The sequence is that of Magnetosome protein MamB (mamB) from Magnetospira sp. (strain QH-2) (Marine magnetic spirillum (strain QH-2)).